The chain runs to 494 residues: UPF0371 protein M28_Spy1076 (494 aa).

It belongs to the UPF0371 family.

The chain is UPF0371 protein M28_Spy1076 from Streptococcus pyogenes serotype M28 (strain MGAS6180).